The primary structure comprises 5146 residues: SCO-spondin (5146 aa).

The N-terminal stretch at 1–17 (MLLPALLFGAAWALANG) is a signal peptide. The EMI domain occupies 18-94 (RWCEQTETVL…ACCPGWGGTH (77 aa)). N-linked (GlcNAc...) asparagine glycosylation is found at Asn-80, Asn-122, and Asn-153. Residues 185–356 (ATCATWSGFH…RLPDSELGCL (172 aa)) form the VWFD 1 domain. Disulfide bonds link Cys-187/Cys-317, Cys-209/Cys-355, and Cys-231/Cys-237. Asn-255 carries N-linked (GlcNAc...) asparagine glycosylation. Positions 464 to 519 (CPGGQLYSDCASACPPSCSAVGEGSEWSCGEECVSGCECPPGLFWDGALCVPAARC) constitute a TIL 1 domain. Positions 557–730 (AECAVGGDGH…FQVAGGGTCS (174 aa)) constitute a VWFD 2 domain. Intrachain disulfides connect Cys-559-Cys-692 and Cys-583-Cys-729. The N-linked (GlcNAc...) asparagine glycan is linked to Asn-814. A TIL 2 domain is found at 822–875 (CPGGQEYQECAPACDRNCGEPEDCGELDNCVAGCNCPLGLLWDPEGQCVPPNLC). Asn-906 carries N-linked (GlcNAc...) asparagine glycosylation. The VWFD 3 domain occupies 1008–1178 (GRCRASGAPH…HSWRLGPLCP (171 aa)). 3 disulfide bridges follow: Cys-1010/Cys-1142, Cys-1032/Cys-1177, and Cys-1053/Cys-1060. A TIL 3 domain is found at 1271-1327 (CERGQVYEACGPTCPATCHDHRPEPGWPCRAVACVEGCFCPEGTLLHGGVCLEPAAC). N-linked (GlcNAc...) asparagine glycosylation occurs at Asn-1349. LDL-receptor class A domains lie at 1372–1409 (GCAEGETPCRESGHCVPHGWLCDNQDDCGDGSDEEGCA), 1412–1447 (VCGEGQVSCCSGRCLPLVLLCDGQDDCGDGMDEQGC), 1448–1484 (PCPQDSLTCADGHCLPPARLCDGHPDCPDGADEESCL), 1488–1526 (DCAPGEVSCVDGTCLGAIQLCDGVWDCLDGGDEGPGHCP), 1561–1597 (PCGPLDFACGSGECAPRGWRCDGEEDCADGSDESGCD), and 1599–1638 (PCAPHHAPCARGSHCVAAEQLCDGVPHCPDGSDEDPGACE). 18 disulfides stabilise this stretch: Cys-1373–Cys-1386, Cys-1380–Cys-1399, Cys-1393–Cys-1408, Cys-1413–Cys-1425, Cys-1420–Cys-1438, Cys-1432–Cys-1447, Cys-1449–Cys-1461, Cys-1456–Cys-1474, Cys-1468–Cys-1483, Cys-1489–Cys-1501, Cys-1496–Cys-1514, Cys-1508–Cys-1525, Cys-1562–Cys-1574, Cys-1569–Cys-1587, Cys-1581–Cys-1596, Cys-1600–Cys-1613, Cys-1607–Cys-1626, and Cys-1620–Cys-1637. Residue Asn-1647 is glycosylated (N-linked (GlcNAc...) asparagine). The LDL-receptor class A 7 domain maps to 1652-1690 (PCPEYSCPDGLCIGFQQVCDGQPDCELAGTAGPSPEEQG). 2 TSP type-1 domains span residues 1691–1745 (CGAW…AACP) and 1747–1805 (DGVW…DGCP). Intrachain disulfides connect Cys-1703-Cys-1739, Cys-1707-Cys-1744, and Cys-1718-Cys-1729. A glycan (N-linked (GlcNAc...) asparagine) is linked at Asn-1806. The region spanning 1809–1865 (CSGELVFHACVPCPLTCDDISGQATCPPDRPCGGPGCWCPAGQVLGAQGRCVWPRQC) is the TIL 4 domain. EGF-like domains follow at residues 1821–1860 (CPLTCDDISGQATCPPDRPCGGPGCWCPAGQVLGAQGRCV) and 1861–1898 (WPRQCPCLVDGSRYWPGQRVKTDCQLCVCQDGRPRRCQ). Residues 1906 to 1962 (NCGWSAWSPWAECLGPCGSRSVQWSFRSPNNPRPAGRGHQCRGLHRKARRCQTEPCE) form the TSP type-1 3 domain. 3 disulfide bridges follow: Cys-1907–Cys-1946, Cys-1918–Cys-1922, and Cys-1956–Cys-1961. One can recognise a VWFC 1 domain in the interval 1962–2022 (EGCEQDGRVH…GVGESCCHCV (61 aa)). Asn-2027 and Asn-2127 each carry an N-linked (GlcNAc...) asparagine glycan. Intrachain disulfides connect Cys-2062–Cys-2220, Cys-2226–Cys-2238, Cys-2233–Cys-2251, and Cys-2245–Cys-2260. The F5/8 type C domain occupies 2062–2220 (CYSPLGLARL…GPLRVELLGC (159 aa)). Residues 2225 to 2261 (LCLGVGHRCVSGECAPRGAPCDGVEDCKDGSDEEGCV) enclose the LDL-receptor class A 8 domain. Residues 2262 to 2346 (TPPAGAGRIE…TPTSQPEAQA (85 aa)) are disordered. 2 stretches are compositionally biased toward polar residues: residues 2273 to 2284 (TAWSSAPSSAQP) and 2331 to 2343 (GSVQTVTPTSQPE). LDL-receptor class A domains lie at 2382–2418 (QCSPGQVPCEVLGCVELEQLCDGREDCLDGSDERPCA) and 2442–2478 (LCSPSQLTCGSGECLPVERRCDLQLDCQDGSDENGCV). Disulfide bonds link Cys-2383-Cys-2395, Cys-2390-Cys-2408, Cys-2402-Cys-2417, Cys-2443-Cys-2455, Cys-2450-Cys-2468, Cys-2462-Cys-2477, Cys-2480-Cys-2516, Cys-2491-Cys-2495, Cys-2526-Cys-2531, Cys-2546-Cys-2583, Cys-2550-Cys-2588, and Cys-2561-Cys-2573. 2 consecutive TSP type-1 domains span residues 2479-2532 (DCGL…QACP) and 2534-2589 (AGAW…QPCA). The 44-residue stretch at 2611 to 2654 (VPPCPPSCLDPEANRSCSGLCLEGCRCPPGLLLQDAGCLPLSEC) folds into the TIL 5 domain. N-linked (GlcNAc...) asparagine glycosylation is found at Asn-2624 and Asn-2673. TSP type-1 domains lie at 2694–2748 (PCGW…SACG), 2751–2807 (VPGW…PVCL), and 2809–2862 (LGVW…QPCT). Cystine bridges form between Cys-2695-Cys-2733, Cys-2706-Cys-2710, Cys-2743-Cys-2747, Cys-2763-Cys-2801, Cys-2767-Cys-2806, Cys-2783-Cys-2791, Cys-2821-Cys-2856, Cys-2825-Cys-2861, and Cys-2836-Cys-2846. N-linked (GlcNAc...) asparagine glycosylation is found at Asn-2915 and Asn-2946. TSP type-1 domains lie at 2964-3019 (ACGW…RPCG) and 3020-3071 (GPAG…GVCP). Cystine bridges form between Cys-2965/Cys-3003, Cys-2976/Cys-2980, and Cys-3013/Cys-3018. A glycan (N-linked (GlcNAc...) asparagine) is linked at Asn-3041. The TIL 6 domain occupies 3070 to 3122 (CPPGKRWLDCAQGPASCAELSAPRGADQPCHPGCYCPSGMLLLNNACVPTQDC). 2 N-linked (GlcNAc...) asparagine glycosylation sites follow: Asn-3143 and Asn-3153. 2 consecutive TSP type-1 domains span residues 3163–3230 (QPTW…PECD) and 3232–3287 (AGGW…LPCP). 6 disulfide bridges follow: Cys-3175/Cys-3224, Cys-3179/Cys-3229, Cys-3190/Cys-3214, Cys-3244/Cys-3281, Cys-3248/Cys-3286, and Cys-3259/Cys-3271. The N-linked (GlcNAc...) asparagine glycan is linked to Asn-3290. One can recognise a TIL 7 domain in the interval 3295–3345 (EGAEYSACGPPCPRSCDDLVHCVWHCQPGCYCPPGQVLSADGTVHVQPGHC). TSP type-1 domains are found at residues 3388–3450 (PGAW…PECP) and 3452–3507 (DGAW…TQCT). Intrachain disulfides connect Cys-3400/Cys-3443, Cys-3404/Cys-3449, Cys-3415/Cys-3427, Cys-3464/Cys-3499, Cys-3467/Cys-3506, and Cys-3477/Cys-3489. N-linked (GlcNAc...) asparagine glycans are attached at residues Asn-3502, Asn-3580, and Asn-3607. The TSP type-1 15 domain maps to 3626–3674 (LGLWGSWGPWEDCSVSCGGGEQLRFRRCPRPPCPGPARQSRTCRTQVCR). 3 disulfide bridges follow: Cys-3638/Cys-3668, Cys-3642/Cys-3673, and Cys-3653/Cys-3658. N-linked (GlcNAc...) asparagine glycosylation occurs at Asn-3783. 4 consecutive TSP type-1 domains span residues 3802 to 3858 (AGGF…PECP), 3872 to 3924 (PGGW…PSCT), 3938 to 3994 (NCSW…RACP), and 3996 to 4051 (PGGW…TPCE). Cystine bridges form between Cys-3814/Cys-3852, Cys-3818/Cys-3857, and Cys-3830/Cys-3842. Asn-3906 and Asn-3938 each carry an N-linked (GlcNAc...) asparagine glycan. 6 disulfides stabilise this stretch: Cys-3939-Cys-3975, Cys-3950-Cys-3954, Cys-3988-Cys-3993, Cys-4008-Cys-4045, Cys-4012-Cys-4050, and Cys-4023-Cys-4035. The TIL 8 domain occupies 4054–4109 (CPAGMEVVSCANRCPRRCSDLQEGIVCQEDQACQQGCRCPEGSLEQDGGCVPLGHC). The region spanning 4101 to 4168 (GGCVPLGHCE…AWSPCSRSCG (68 aa)) is the VWFC 2 domain. Asn-4131 is a glycosylation site (N-linked (GlcNAc...) asparagine). 4 consecutive TSP type-1 domains span residues 4151–4204 (HCAW…SPCP), 4245–4300 (LGAW…WPCP), 4302–4358 (LPDT…GPCL), and 4360–4414 (ECVW…GNCS). Intrachain disulfides connect Cys-4152–Cys-4188, Cys-4163–Cys-4167, Cys-4198–Cys-4203, Cys-4257–Cys-4294, Cys-4261–Cys-4299, and Cys-4272–Cys-4284. A glycan (N-linked (GlcNAc...) asparagine) is linked at Asn-4341. Disulfide bonds link Cys-4361/Cys-4398, Cys-4372/Cys-4374, and Cys-4408/Cys-4413. An N-linked (GlcNAc...) asparagine glycan is attached at Asn-4412. One can recognise a TIL 9 domain in the interval 4418 to 4473 (CAPPFEFQACGSPCTGLCATYLSPWLCQDLPPCQPGCYCPEGLLEQAGGCVPPEQC). A TSP type-1 24 domain is found at 4610-4661 (LCQWGPWGAWSPCQVPCSGGFRLRWREAGIPPGGGCRGPWAQTESCNMGPCP). Cystine bridges form between Cys-4611/Cys-4645, Cys-4622/Cys-4626, and Cys-4655/Cys-4660. In terms of domain architecture, TIL 10 spans 4675–4721 (DCANQCPRSCVDLWDRVECLQGPCRPGCRCPPGQLVQDGHCVPVSSC). 4 N-linked (GlcNAc...) asparagine glycosylation sites follow: Asn-4729, Asn-4746, Asn-4751, and Asn-4772. Residues 4761–4814 (CPTLGPWSAWSNCSAPCGGGTTKRHRSCKEGPGVTPCQAQDMEQQQDCNLQPCP) enclose the TSP type-1 25 domain. 3 cysteine pairs are disulfide-bonded: Cys-4773–Cys-4808, Cys-4777–Cys-4813, and Cys-4788–Cys-4797. Residues 4816-4870 (CPPGQVLSACAVSCPRLCSHLQPGTPCMQEPCQLGCDCPRGQLLHNGTCVPPAEC) form the TIL 11 domain. N-linked (GlcNAc...) asparagine glycosylation is found at Asn-4861, Asn-4901, Asn-4947, and Asn-4954. One can recognise a VWFC 3 domain in the interval 4983-5041 (CECWHHGRPHPPGSEWQKACESCRCVSGESICTQHCPPLTCAQGETAVQEPGGCCPTCR). 4 disulfides stabilise this stretch: Cys-5052-Cys-5100, Cys-5066-Cys-5117, Cys-5076-Cys-5133, and Cys-5080-Cys-5135. In terms of domain architecture, CTCK spans 5052-5139 (CRHLTELRNL…IHSCQCSACQ (88 aa)). N-linked (GlcNAc...) asparagine glycosylation is present at Asn-5060.

Belongs to the thrombospondin family. In terms of tissue distribution, subcommissural organ. Located at the boundary of the diencephalon and mesencephalon beneath the posterior commissure at the point where the axons cross the midline.

The protein localises to the secreted. It localises to the extracellular space. Involved in the modulation of neuronal aggregation. May be involved in developmental events during the formation of the central nervous system. This chain is SCO-spondin (SSPO), found in Bos taurus (Bovine).